Reading from the N-terminus, the 51-residue chain is VTVDCSGYPKPACTLEYFPLCGSDNQTYANKCTFCNAVVEKNVTLNHLGEC.

Positions 3–51 (VDCSGYPKPACTLEYFPLCGSDNQTYANKCTFCNAVVEKNVTLNHLGEC) constitute a Kazal-like domain. Cystine bridges form between Cys-5–Cys-35, Cys-13–Cys-32, and Cys-21–Cys-51. N-linked (GlcNAc...) asparagine glycosylation occurs at Asn-42.

It is found in the secreted. The polypeptide is Ovomucoid (Nothoprocta perdicaria (Chilean tinamou)).